Here is a 360-residue protein sequence, read N- to C-terminus: Putative transcription factor A494R (360 aa).

Residues 153-175 (CTCGGQMELWVNSTQSDLVCNEC) fold into a zinc finger.

Belongs to the nucleo-cytoplasmic large DNA viruses (NCLDVs) VLTF-3 family.

Functionally, putative transcription factor. In Paramecium bursaria Chlorella virus 1 (PBCV-1), this protein is Putative transcription factor A494R.